The sequence spans 258 residues: MSSQPFTNKVIALTGSASGIGLETAKLLASRGARLSLADIQEDKLKELQAXXESEYHVDVITTKVDVRKFGEVEAWINKTIDNFGKLDGSANLAGVAPESIGLKGIVEQDLDEWEFVLGVNLTGTMNSLKAQLKVMANNGSIVNASSIRGLTGAAKNASYSSAKHGIIGLTRTAAKEVGGKGIRVNAICPGRISTPMLKTAENSIGLHLQPGSANYPPIALGRDGEAKEVAQLVAFLLSDESTYISGADISIDGGWRC.

Residues Ile20, Asp66, and Lys130 each coordinate NADP(+). Catalysis depends on proton donor residues Ser146 and Tyr160. NADP(+) is bound by residues Tyr160, Lys164, Ile193, and Thr195. Residue Lys164 is the Lowers pKa of active site Tyr of the active site.

This sequence belongs to the short-chain dehydrogenases/reductases (SDR) family.

It participates in hormone biosynthesis. Its function is as follows. Short-chain dehydrogenase/reductase; part of the gene cluster that mediates the biosynthesis of abscisic acid (ABA), a phytohormone that acts antagonistically toward salicylic acid (SA), jasmonic acid (JA) and ethylene (ETH) signaling, to impede plant defense responses. The first step of the pathway catalyzes the reaction from farnesyl diphosphate to alpha-ionylideneethane performed by the alpha-ionylideneethane synthase aba3 via a three-step reaction mechanism involving 2 neutral intermediates, beta-farnesene and allofarnesene. The cytochrome P450 monooxygenase aba1 might then be involved in the conversion of alpha-ionylideneethane to alpha-ionylideneacetic acid. Alpha-ionylideneacetic acid is further converted to abscisic acid in 2 steps involving the cytochrome P450 monooxygenase aba2 and the short-chain dehydrogenase/reductase aba4, via the intermediates 1'-deoxy-ABA or 1',4'-trans-diol-ABA, depending on the order of action of these 2 enzymes. Aba2 is responsible for the hydroxylation of carbon atom C-1' and aba4 might be involved in the oxidation of the C-4' carbon atom. This chain is Short-chain dehydrogenase/reductase aba4, found in Botryotinia fuckeliana (Noble rot fungus).